We begin with the raw amino-acid sequence, 114 residues long: DNA-directed RNA polymerases II, IV and V subunit 9A (114 aa).

Zn(2+) is bound by residues cysteine 7, cysteine 10, cysteine 29, cysteine 32, cysteine 76, cysteine 79, cysteine 103, and cysteine 108. The segment at 72 to 113 adopts a TFIIS-type zinc-finger fold; that stretch reads KAVRCSKCQHREAVFFQATARGEEGMTLFFVCCNPNCGHRWR.

Belongs to the archaeal RpoM/eukaryotic RPA12/RPB9/RPC11 RNA polymerase family. Component of the RNA polymerase II, IV and V complexes. Interacts with NRPD1.

It is found in the nucleus. The protein localises to the nucleolus. Functionally, DNA-dependent RNA polymerase catalyzes the transcription of DNA into RNA using the four ribonucleoside triphosphates as substrates. Component of RNA polymerase II which synthesizes mRNA precursors and many functional non-coding RNAs. Pol II is the central component of the basal RNA polymerase II transcription machinery. It is composed of mobile elements that move relative to each other. Component of RNA polymerases IV and V which mediate short-interfering RNAs (siRNA) accumulation and subsequent RNA-directed DNA methylation-dependent (RdDM) transcriptional gene silencing (TGS) of endogenous repeated sequences, including transposable elements. Required for RNA silencing. The chain is DNA-directed RNA polymerases II, IV and V subunit 9A (NRPB9A) from Arabidopsis thaliana (Mouse-ear cress).